A 338-amino-acid polypeptide reads, in one-letter code: MKTDDFDYKLPEELIASYPLENRDASRLLKLNKQTGEIADYKFTDFIDFINPGDLLVFNNSKVMLARLYGSKTTGAKLEYLIERIKNPKLFETHIKANRSPAIGSEIYVEDTLAKVLDKDGGMYLLEIQGDKDIYQLMEEFGHIPLPPYMKRDDEEFDAERYQTVYAQDLGSVAALTAGLHFSKELMQQIKDKGVDIAYITLHVGSGTFKPVQVDDVESHKMHAEVISVPVEVCQKIRQTKENGGRVITIGTTSVRSLETAGQNGQIEPYQGETDIFLYPGKKFNVVDAMITNFHLPKSTLIMLVSAFADKEKIIKAYEHAIAERYRFFSYGDAMFIF.

This sequence belongs to the QueA family. As to quaternary structure, monomer.

Its subcellular location is the cytoplasm. The enzyme catalyses 7-aminomethyl-7-carbaguanosine(34) in tRNA + S-adenosyl-L-methionine = epoxyqueuosine(34) in tRNA + adenine + L-methionine + 2 H(+). The protein operates within tRNA modification; tRNA-queuosine biosynthesis. In terms of biological role, transfers and isomerizes the ribose moiety from AdoMet to the 7-aminomethyl group of 7-deazaguanine (preQ1-tRNA) to give epoxyqueuosine (oQ-tRNA). This is S-adenosylmethionine:tRNA ribosyltransferase-isomerase from Francisella tularensis subsp. holarctica (strain FTNF002-00 / FTA).